The sequence spans 600 residues: Aspartate--tRNA(Asp/Asn) ligase (600 aa).

An L-aspartate-binding site is contributed by E175. The aspartate stretch occupies residues 199–202; the sequence is QLFK. R221 contributes to the L-aspartate binding site. ATP-binding positions include 221 to 223 and Q230; that span reads RDE. H453 provides a ligand contact to L-aspartate. An ATP-binding site is contributed by E487. R494 contacts L-aspartate. 539–542 provides a ligand contact to ATP; the sequence is GWDR. The interval 564–600 is disordered; sequence GGVDPLTDAPAPITPLQRKESGIDAKPKAAENKPEEK. Residues 580–600 show a composition bias toward basic and acidic residues; that stretch reads QRKESGIDAKPKAAENKPEEK.

It belongs to the class-II aminoacyl-tRNA synthetase family. Type 1 subfamily. Homodimer.

Its subcellular location is the cytoplasm. It catalyses the reaction tRNA(Asx) + L-aspartate + ATP = L-aspartyl-tRNA(Asx) + AMP + diphosphate. Aspartyl-tRNA synthetase with relaxed tRNA specificity since it is able to aspartylate not only its cognate tRNA(Asp) but also tRNA(Asn). Reaction proceeds in two steps: L-aspartate is first activated by ATP to form Asp-AMP and then transferred to the acceptor end of tRNA(Asp/Asn). The chain is Aspartate--tRNA(Asp/Asn) ligase from Corynebacterium efficiens (strain DSM 44549 / YS-314 / AJ 12310 / JCM 11189 / NBRC 100395).